The primary structure comprises 238 residues: Small ribosomal subunit protein uS2 (238 aa).

It belongs to the universal ribosomal protein uS2 family.

This is Small ribosomal subunit protein uS2 from Chloroflexus aurantiacus (strain ATCC 29366 / DSM 635 / J-10-fl).